The sequence spans 366 residues: Cobalt-precorrin-5B C(1)-methyltransferase (366 aa).

The protein belongs to the CbiD family.

It carries out the reaction Co-precorrin-5B + S-adenosyl-L-methionine = Co-precorrin-6A + S-adenosyl-L-homocysteine. It participates in cofactor biosynthesis; adenosylcobalamin biosynthesis; cob(II)yrinate a,c-diamide from sirohydrochlorin (anaerobic route): step 6/10. Its function is as follows. Catalyzes the methylation of C-1 in cobalt-precorrin-5B to form cobalt-precorrin-6A. This chain is Cobalt-precorrin-5B C(1)-methyltransferase, found in Pseudomonas paraeruginosa (strain DSM 24068 / PA7) (Pseudomonas aeruginosa (strain PA7)).